Here is a 248-residue protein sequence, read N- to C-terminus: Anamorsin homolog (248 aa).

An N-terminal SAM-like domain region spans residues 4–129 (FKGLQKTLYI…ETGSSARLSF (126 aa)). The segment at 130 to 161 (AKKDASALNVWKISGDDEELIDEEDLLDEEDK) is linker. Residues C172, C181, C184, and C186 each coordinate [2Fe-2S] cluster. A fe-S binding site A region spans residues 172–186 (CSTTGKRKACKNCSC). [4Fe-4S] cluster is bound by residues C209, C212, C220, and C223. 2 short sequence motifs (cx2C motif) span residues 209–212 (CGNC) and 220–223 (CSTC). The tract at residues 209 to 223 (CGNCYLGDAFRCSTC) is fe-S binding site B.

This sequence belongs to the anamorsin family. In terms of assembly, monomer. The cofactor is [2Fe-2S] cluster. [4Fe-4S] cluster serves as cofactor.

Its subcellular location is the cytoplasm. The protein resides in the mitochondrion intermembrane space. In terms of biological role, component of the cytosolic iron-sulfur (Fe-S) protein assembly (CIA) machinery. Required for the maturation of extramitochondrial Fe-S proteins. Part of an electron transfer chain functioning in an early step of cytosolic Fe-S biogenesis, facilitating the de novo assembly of a [4Fe-4S] cluster on the cytosolic Fe-S scaffold complex. Electrons are transferred from NADPH via a FAD- and FMN-containing diflavin oxidoreductase. Together with the diflavin oxidoreductase, also required for the assembly of the diferric tyrosyl radical cofactor of ribonucleotide reductase (RNR), probably by providing electrons for reduction during radical cofactor maturation in the catalytic small subunit. The chain is Anamorsin homolog from Drosophila ananassae (Fruit fly).